The chain runs to 332 residues: DnAJ-like protein slr0093 (332 aa).

Positions 6–75 constitute a J domain; that stretch reads FKDYYQILGV…RQKYDQFGRY (70 aa).

The protein is DnAJ-like protein slr0093 of Synechocystis sp. (strain ATCC 27184 / PCC 6803 / Kazusa).